The sequence spans 174 residues: RNA pyrophosphohydrolase (174 aa).

The region spanning 6-149 is the Nudix hydrolase domain; sequence GYRPNVGIIL…KRDVYERALS (144 aa). The Nudix box motif lies at 38-59; that stretch reads GGIKPGESPEAAMYRELLEEVG.

Belongs to the Nudix hydrolase family. RppH subfamily. It depends on a divalent metal cation as a cofactor.

In terms of biological role, accelerates the degradation of transcripts by removing pyrophosphate from the 5'-end of triphosphorylated RNA, leading to a more labile monophosphorylated state that can stimulate subsequent ribonuclease cleavage. In Chromobacterium violaceum (strain ATCC 12472 / DSM 30191 / JCM 1249 / CCUG 213 / NBRC 12614 / NCIMB 9131 / NCTC 9757 / MK), this protein is RNA pyrophosphohydrolase.